A 209-amino-acid polypeptide reads, in one-letter code: 60S ribosomal subunit assembly/export protein loc-1 (209 aa).

Disordered stretches follow at residues 1 to 53 (MAPT…SKGR) and 135 to 209 (REAR…AAPE). Basic and acidic residues-rich tracts occupy residues 20-33 (GSKDAERSRNDGVL) and 135-159 (REARRAEAEKKEAERKARLEETKDS). Positions 126–170 (IKARQMEEIREARRAEAEKKEAERKARLEETKDSLRKKRKRSKQS) form a coiled coil.

The protein belongs to the LOC1 family. In terms of assembly, component of the 66S pre-ribosomal particle.

It localises to the nucleus. Its subcellular location is the nucleolus. Its function is as follows. Required for efficient assembly and nuclear export of the 60S ribosomal subunit. This is 60S ribosomal subunit assembly/export protein loc-1 (loc-1) from Neurospora crassa (strain ATCC 24698 / 74-OR23-1A / CBS 708.71 / DSM 1257 / FGSC 987).